The sequence spans 418 residues: Creatine kinase U-type, mitochondrial (418 aa).

The transit peptide at 1–39 (MAGPFSRLLSARPGLRLLALAGAGSLTAGILLRPESVGA) directs the protein to the mitochondrion. A cardiolipin-binding region spans residues 40-64 (AAAERRRLYPPSAEYPDLRKHNNCM). Positions 46–132 (RLYPPSAEYP…FDPVIQERHN (87 aa)) constitute a Phosphagen kinase N-terminal domain. Phosphoserine is present on S152. Residues 159–401 (YVLSSRVRTG…NYLIDCERRL (243 aa)) enclose the Phosphagen kinase C-terminal domain. 162–166 (SSRVR) contributes to the ATP binding site. S197 bears the Phosphoserine mark. T214 carries the phosphothreonine modification. Residue H225 coordinates ATP. S233 bears the Phosphoserine mark. ATP contacts are provided by residues R270, R326, and 354–359 (RGTGGV). The residue at position 356 (T356) is a Phosphothreonine. S366 is subject to Phosphoserine. ATP is bound at residue D369.

It belongs to the ATP:guanido phosphotransferase family. In terms of assembly, exists as an octamer composed of four MTCK homodimers.

The protein resides in the mitochondrion inner membrane. The catalysed reaction is creatine + ATP = N-phosphocreatine + ADP + H(+). In terms of biological role, reversibly catalyzes the transfer of phosphate between ATP and various phosphogens (e.g. creatine phosphate). Creatine kinase isoenzymes play a central role in energy transduction in tissues with large, fluctuating energy demands, such as skeletal muscle, heart, brain and spermatozoa. The chain is Creatine kinase U-type, mitochondrial (Ckmt1) from Mus musculus (Mouse).